The primary structure comprises 628 residues: Chaperone protein HtpG (628 aa).

An a; substrate-binding region spans residues 1–337 (MSEKKYTFET…SADLPLNVSR (337 aa)). Residues 338-554 (EILQHNKVID…DYGMSLHMQK (217 aa)) are b. The tract at residues 555-628 (MMEEAGQSFM…FVKLVNKYIR (74 aa)) is c.

This sequence belongs to the heat shock protein 90 family. As to quaternary structure, homodimer.

It is found in the cytoplasm. In terms of biological role, molecular chaperone. Has ATPase activity. The sequence is that of Chaperone protein HtpG from Francisella tularensis subsp. tularensis (strain WY96-3418).